A 234-amino-acid chain; its full sequence is ATP synthase subunit a 1 (234 aa).

5 consecutive transmembrane segments (helical) span residues 20–40, 76–96, 105–125, 162–184, and 195–215; these read ETVVTTWLIMLVLVVASILLT, LLPLIGTFWIFLPVANLLGVI, DLSVTAALALVVFFAVHAYGV, LFGNIMSLEMAALLILLVAGFLA, and EALVQAYIFGMLALIYVAGAM.

Belongs to the ATPase A chain family. F-type ATPases have 2 components, CF(1) - the catalytic core - and CF(0) - the membrane proton channel. CF(1) has five subunits: alpha(3), beta(3), gamma(1), delta(1), epsilon(1). CF(0) has three main subunits: a(1), b(2) and c(9-12). The alpha and beta chains form an alternating ring which encloses part of the gamma chain. CF(1) is attached to CF(0) by a central stalk formed by the gamma and epsilon chains, while a peripheral stalk is formed by the delta and b chains.

The protein localises to the cell inner membrane. In terms of biological role, key component of the proton channel; it plays a direct role in the translocation of protons across the membrane. This Hahella chejuensis (strain KCTC 2396) protein is ATP synthase subunit a 1.